The sequence spans 545 residues: Glucose-6-phosphate isomerase (545 aa).

Glu-351 (proton donor) is an active-site residue. Active-site residues include His-382 and Lys-510.

This sequence belongs to the GPI family.

The protein resides in the cytoplasm. The enzyme catalyses alpha-D-glucose 6-phosphate = beta-D-fructose 6-phosphate. Its pathway is carbohydrate biosynthesis; gluconeogenesis. It functions in the pathway carbohydrate degradation; glycolysis; D-glyceraldehyde 3-phosphate and glycerone phosphate from D-glucose: step 2/4. Its function is as follows. Catalyzes the reversible isomerization of glucose-6-phosphate to fructose-6-phosphate. This is Glucose-6-phosphate isomerase from Helicobacter pylori (strain G27).